A 312-amino-acid polypeptide reads, in one-letter code: 1-(5-phosphoribosyl)-5-[(5-phosphoribosylamino)methylideneamino] imidazole-4-carboxamide isomerase HISN3, chloroplastic (312 aa).

Residues 1–67 constitute a chloroplast transit peptide; that stretch reads MRSPASTPSI…IHKGKVKQIV (67 aa). 1-(5-phospho-beta-D-ribosyl)-5-[(5-phospho-beta-D-ribosylamino)methylideneamino]imidazole-4-carboxamide is bound at residue aspartate 57. Glutamine 65 is a binding site for 5-[(5-phospho-1-deoxy-D-ribulos-1-ylimino)methylamino]-1-(5-phospho-beta-D-ribosyl)imidazole-4-carboxamide. The Na(+) site is built by glutamine 65 and isoleucine 66. Glycine 68 contacts 1-(5-phospho-beta-D-ribosyl)-5-[(5-phospho-beta-D-ribosylamino)methylideneamino]imidazole-4-carboxamide. Residues histidine 108, glycine 138, threonine 158, and serine 159 each contribute to the 5-[(5-phospho-1-deoxy-D-ribulos-1-ylimino)methylamino]-1-(5-phospho-beta-D-ribosyl)imidazole-4-carboxamide site. The 1-(5-phospho-beta-D-ribosyl)-5-[(5-phospho-beta-D-ribosylamino)methylideneamino]imidazole-4-carboxamide site is built by glycine 138, threonine 158, and serine 159. Positions 159 and 162 each coordinate Na(+). 4 residues coordinate 1-(5-phospho-beta-D-ribosyl)-5-[(5-phospho-beta-D-ribosylamino)methylideneamino]imidazole-4-carboxamide: aspartate 187, arginine 203, tryptophan 204, and histidine 230. Aspartate 187 is a 5-[(5-phospho-1-deoxy-D-ribulos-1-ylimino)methylamino]-1-(5-phospho-beta-D-ribosyl)imidazole-4-carboxamide binding site. Tryptophan 204 serves as a coordination point for 5-[(5-phospho-1-deoxy-D-ribulos-1-ylimino)methylamino]-1-(5-phospho-beta-D-ribosyl)imidazole-4-carboxamide. Glutamate 235 serves as a coordination point for Na(+). Residues glycine 236, glycine 262, glycine 285, and serine 286 each coordinate 1-(5-phospho-beta-D-ribosyl)-5-[(5-phospho-beta-D-ribosylamino)methylideneamino]imidazole-4-carboxamide. 5-[(5-phospho-1-deoxy-D-ribulos-1-ylimino)methylamino]-1-(5-phospho-beta-D-ribosyl)imidazole-4-carboxamide contacts are provided by glycine 236, glycine 262, glycine 285, and serine 286.

Belongs to the HisA/HisF family. Na(+) is required as a cofactor.

It is found in the plastid. The protein localises to the chloroplast. The catalysed reaction is 1-(5-phospho-beta-D-ribosyl)-5-[(5-phospho-beta-D-ribosylamino)methylideneamino]imidazole-4-carboxamide = 5-[(5-phospho-1-deoxy-D-ribulos-1-ylimino)methylamino]-1-(5-phospho-beta-D-ribosyl)imidazole-4-carboxamide. Its pathway is amino-acid biosynthesis; L-histidine biosynthesis; L-histidine from 5-phospho-alpha-D-ribose 1-diphosphate: step 4/9. Component of the histidine biosynthesis pathway that catalyzes the isomerization of 5'-ProFAR (pro-phosphoribosyl formimino-5-aminoimidazole-4-carboxamide ribonucleotide, referred as 1-(5-phospho-beta-D-ribosyl)-5-[(5-phospho-beta-D-ribosylamino)methylideneamino]imidazole-4-carboxamide) to PrFAR (phosphoribulosyl formimino-5-aminoimidazole-4-carboxamide ribonucleotide, referred as 5-[(5-phospho-1-deoxy-D-ribulos-1-ylimino)methylamino]-1-(5-phospho-beta-D-ribosyl)imidazole-4-carboxamide). The polypeptide is 1-(5-phosphoribosyl)-5-[(5-phosphoribosylamino)methylideneamino] imidazole-4-carboxamide isomerase HISN3, chloroplastic (Medicago truncatula (Barrel medic)).